The sequence spans 656 residues: Choline transporter-like protein 1 (656 aa).

The N-myristoyl glycine moiety is linked to residue glycine 2. Residues 2 to 29 (GCCSSASAAQSSKREWKPLEDRSCTDIP) are Cytoplasmic-facing. The chain crosses the membrane as a helical span at residues 30–50 (WLLLFVLFCIGMGFICGFSVA). Residues 51-211 (TGAAARLVSG…RLISGVMTSK (161 aa)) are Extracellular-facing. Asparagine 134 and asparagine 179 each carry an N-linked (GlcNAc...) asparagine glycan. A helical membrane pass occupies residues 212–232 (EIILGLCLLSLVLSMILMVII). Over 233 to 237 (RYISR) the chain is Cytoplasmic. Residues 238 to 258 (VLVWILTILVILGSLGGTGVL) traverse the membrane as a helical segment. The Extracellular portion of the chain corresponds to 259-287 (WWLYAKQRRSPKETVIPEQLQIAEDNLRA). Residues 288-308 (LLIYAISATVFTVILFLIMLV) form a helical membrane-spanning segment. The Cytoplasmic portion of the chain corresponds to 309-314 (MRKRVA). A helical membrane pass occupies residues 315 to 335 (LTIALFHVAGKVFIHLPLLVF). The Extracellular segment spans residues 336–337 (QP). A helical membrane pass occupies residues 338–358 (FWTFFALVLFWAYWIMTLLFL). At 359 to 379 (GTTGSAVQNEQGFVEYKISGP) the chain is on the cytoplasmic side. The helical transmembrane segment at 380–400 (LQYMWWYHVVGLIWISEFILA) threads the bilayer. Residues 401–441 (CQQMTVAGAVVTYYFTRDKRNLPFTPILASVNRLIRYHLGT) lie on the Extracellular side of the membrane. A helical transmembrane segment spans residues 442-462 (VAKGSFIITLVKIPRMILMYI). Residues 463-536 (HSQLKGKENA…RVAAINTVGD (74 aa)) are Cytoplasmic-facing. Residues 537–557 (FMLFLGKVLIVCSTGLAGIML) form a helical membrane-spanning segment. Topologically, residues 558–565 (LNYQQDYT) are extracellular. The chain crosses the membrane as a helical span at residues 566-586 (VWVLPLIIVCLFAFLVAHCFL). Over 587–656 (SIYEMVVDVL…KPMASGASSA (70 aa)) the chain is Cytoplasmic. Residues 635–656 (AGKGGAADARKLKPMASGASSA) are disordered. Residue serine 651 is modified to Phosphoserine.

It belongs to the CTL (choline transporter-like) family. Expressed in neurons, oligodendrocytes and astrocytes. Also expressed in the mucosal cell layer of the colon. In the developing brain, isoform 1 is expressed in both neurons and oligodendroglial cells, whereas isoform 2 is restricted to oligodendroglial cells.

The protein localises to the cell membrane. It is found in the mitochondrion outer membrane. It carries out the reaction choline(out) + n H(+)(in) = choline(in) + n H(+)(out). The catalysed reaction is ethanolamine(out) + n H(+)(in) = ethanolamine(in) + n H(+)(out). Its function is as follows. Choline transporter, acts as a choline/H+ antiporter. Also acts as a high-affinity ethanolamine/H+ antiporter, regulating the supply of extracellular ethanolamine (Etn) for the CDP-Etn pathway, redistribute intracellular Etn and balance the CDP-Cho and CDP-Etn arms of the Kennedy pathway. Involved in membrane synthesis and myelin production. The sequence is that of Choline transporter-like protein 1 (Slc44a1) from Rattus norvegicus (Rat).